The primary structure comprises 690 residues: Protein arginine N-methyltransferase 7 (690 aa).

2 SAM-dependent MTase PRMT-type domains span residues 14–357 and 366–690; these read ENSW…YSLW and AKSV…QKKP.

This sequence belongs to the class I-like SAM-binding methyltransferase superfamily. Protein arginine N-methyltransferase family. PRMT7 subfamily.

Its function is as follows. Essential arginine methyltransferase that can both catalyze the formation of omega-N monomethylarginine (MMA) and symmetrical dimethylarginine (sDMA). Specifically mediates the symmetrical dimethylation of arginine residues in the small nuclear ribonucleoproteins SmD1 and SmD3. In Drosophila ananassae (Fruit fly), this protein is Protein arginine N-methyltransferase 7 (Art7).